A 495-amino-acid chain; its full sequence is UDP-glycosyltransferase 73C10 (495 aa).

The Proton acceptor role is filled by histidine 24. Histidine 24 lines the an anthocyanidin pocket. The active-site Charge relay is aspartate 129. Positions 358, 373, 376, 377, 378, and 381 each coordinate UDP-alpha-D-glucose. Residue glycine 396 participates in an anthocyanidin binding. UDP-alpha-D-glucose is bound by residues aspartate 397 and glutamine 398.

It belongs to the UDP-glycosyltransferase family.

The catalysed reaction is oleanolate + UDP-alpha-D-glucose = oleanolate 3-O-beta-D-glucoside + UDP + H(+). In terms of biological role, catalyzes the transfer of a glucose (Glc) moiety from UDP-Glc to the C-3 position of the oleanane sapogenins oleanolate and hederagenin, and to the C-28 carboxylic group of the lupane sapogenin betulinate. The monoglucosylated hederagenin 3-O-beta-D-glucoside is a feeding deterrent of the yellow-striped flea beetle (Phyllotreta nemorum). The protein is UDP-glycosyltransferase 73C10 of Barbarea vulgaris (Yellow rocket).